A 362-amino-acid chain; its full sequence is GDSL esterase/lipase 6 (362 aa).

The signal sequence occupies residues 1-23 (MSSSSSMDLLMCLLLLISPVVLA). Serine 38 serves as the catalytic Nucleophile. 5 N-linked (GlcNAc...) asparagine glycosylation sites follow: asparagine 50, asparagine 103, asparagine 107, asparagine 195, and asparagine 296. Residues aspartate 323 and histidine 326 contribute to the active site.

Belongs to the 'GDSL' lipolytic enzyme family.

Its subcellular location is the secreted. This Arabidopsis thaliana (Mouse-ear cress) protein is GDSL esterase/lipase 6 (GLIP6).